Consider the following 539-residue polypeptide: Probable glycerol kinase (539 aa).

T12 is a binding site for substrate. R16 serves as a coordination point for ATP. 3 residues coordinate substrate: R86, Y168, and D285. ATP-binding positions include T307, G352, and 453–457 (GMAKN).

The protein belongs to the FGGY kinase family.

It catalyses the reaction glycerol + ATP = sn-glycerol 3-phosphate + ADP + H(+). Its pathway is polyol metabolism; glycerol degradation via glycerol kinase pathway; sn-glycerol 3-phosphate from glycerol: step 1/1. The protein is Probable glycerol kinase (gk) of Dictyostelium discoideum (Social amoeba).